We begin with the raw amino-acid sequence, 555 residues long: Formate--tetrahydrofolate ligase (555 aa).

Position 64–71 (64–71 (TKAGIGKT)) interacts with ATP.

Belongs to the formate--tetrahydrofolate ligase family.

The enzyme catalyses (6S)-5,6,7,8-tetrahydrofolate + formate + ATP = (6R)-10-formyltetrahydrofolate + ADP + phosphate. Its pathway is one-carbon metabolism; tetrahydrofolate interconversion. The protein is Formate--tetrahydrofolate ligase of Phocaeicola vulgatus (strain ATCC 8482 / DSM 1447 / JCM 5826 / CCUG 4940 / NBRC 14291 / NCTC 11154) (Bacteroides vulgatus).